We begin with the raw amino-acid sequence, 393 residues long: S-adenosylmethionine synthase 3 (393 aa).

Mg(2+) is bound at residue Glu-9. His-15 contributes to the ATP binding site. Glu-43 serves as a coordination point for K(+). 2 residues coordinate L-methionine: Glu-56 and Gln-99. Residues 167-169, 235-238, Asp-246, 252-253, Ala-269, Lys-273, and Lys-277 contribute to the ATP site; these read DGK, SGRF, and RK. Asp-246 contacts L-methionine. Residue Lys-277 participates in L-methionine binding.

This sequence belongs to the AdoMet synthase family. As to quaternary structure, homotetramer. Mn(2+) is required as a cofactor. It depends on Mg(2+) as a cofactor. The cofactor is Co(2+). K(+) serves as cofactor.

It is found in the cytoplasm. The enzyme catalyses L-methionine + ATP + H2O = S-adenosyl-L-methionine + phosphate + diphosphate. The protein operates within amino-acid biosynthesis; S-adenosyl-L-methionine biosynthesis; S-adenosyl-L-methionine from L-methionine: step 1/1. Its function is as follows. Catalyzes the formation of S-adenosylmethionine from methionine and ATP. The reaction comprises two steps that are both catalyzed by the same enzyme: formation of S-adenosylmethionine (AdoMet) and triphosphate, and subsequent hydrolysis of the triphosphate. The polypeptide is S-adenosylmethionine synthase 3 (SAM3) (Petunia hybrida (Petunia)).